The chain runs to 190 residues: High affinity copper uptake protein 1 (190 aa).

The tract at residues 1–35 (MDHSHHMGMSYMDSNSTMQPSHHHPTTSASHSHGG) is disordered. The Extracellular segment spans residues 1 to 61 (MDHSHHMGMS…KNVELLFSGL (61 aa)). Positions 5–6 (HH) match the Bis-His motif motif. A Methionine segments (Mets) motif motif is present at residues 7 to 12 (MGMSYM). A glycan (N-linked (GlcNAc...) asparagine) is linked at Asn-15. The segment covering 26-35 (TTSASHSHGG) has biased composition (low complexity). An O-linked (GalNAc...) threonine glycan is attached at Thr-27. A helical membrane pass occupies residues 62 to 82 (VINTAGEMAGAFVAVFLLAMF). The Cytoplasmic segment spans residues 83 to 132 (YEGLKIARESLLRKSQVSIRYNSMPVPGPNGTILMETHKTVGQQMLSFPH). At Thr-114 the chain carries Phosphothreonine. Residues 133 to 153 (LLQTVLHIIQVVISYFLMLIF) traverse the membrane as a helical segment. The Extracellular segment spans residues 154–156 (MTY). A helical transmembrane segment spans residues 157–177 (NGYLCIAVAAGAGTGYFLFSW). Topologically, residues 178-190 (KKAVVVDITEHCH) are cytoplasmic. Cysteine sulfenic acid (-SOH) is present on Cys-189.

This sequence belongs to the copper transporter (Ctr) (TC 1.A.56) family. SLC31A subfamily. Homotrimer; is stabilized by cisplatin via interactions between cisplatin and the methionine-rich clusters, and could be crucial for the copper(2+) reduction process and copper(1+) stabilization. Heterotrimer between SLC31A1, CCS and SOD1; this heterotrimer is copper(1+)-mediated and its maintenance is regulated through SOD1 activation. Interacts with KDR; this interaction is induced upon VEGFA stimulation leading to SLC31A1 and KDR subsequent co-internalization to early endosomes, thereby activating KDR downstream signaling in endothelial cells. Interacts (via C-terminal domain) with ATOX1 (via dimer form); this interaction improves ATOX1 stability and controls intracellular copper(1+) levels. Interacts with SLC31A2; this interaction stabilizes SLC31A2 and protects its from ubiquitination and degradation. Interacts (via C-terminal domain) with CCS; this interaction is copper(1+)-mediated. Post-translationally, O-Glycosylation at Thr-27 protects from proteolytic cleavage in the N-terminal extracellular domain. Proteolytic cleavage, leading to a truncated form, is facilitated by SLC31A2 and initiated preferentially by CTSL and to a minor extend by CTSB in endolysosomal compartments. In vitro, is cleaved by CTSL/cathepsin L between residues 8 and 9 from the amino terminus. A post-CTSL/cathepsin L processing occurs to yield to the fully truncated form. In terms of processing, sulfenylated at Cys-189 after stimulation with VEGFA, which induces SLC31A1-KDR disulfide bond formation and their co-internalization to early endosomes, driving to a sustained VEGFR2 signaling.

It is found in the cell membrane. The protein resides in the early endosome membrane. The protein localises to the recycling endosome membrane. It localises to the apical cell membrane. Its subcellular location is the late endosome membrane. It is found in the basolateral cell membrane. It carries out the reaction Ag(+)(out) = Ag(+)(in). It catalyses the reaction Cu(+)(out) = Cu(+)(in). With respect to regulation, copper(1+) transport is stimulated by extracellular acidic pH and high potassium ions concentrations. Copper(1+) import is regulated by a copper(1+)-dependent recycling of SLC31A1. In terms of biological role, uniporter that mediates the transport of copper(1+) from the extracellular space to the cytoplasm, across the plasma membrane and delivers directly copper(1+) to specific chaperone such as ATOX1, via a copper(1+)- mediated transient interaction between the C-terminal domain and a copper(1+) chaperone, thus controlling intracellular copper(1+) levels. May function in copper(1+) import from the apical membrane thus may drive intestinal copper absorption. The copper(1+) transport mechanism is sodium-independent, saturable and of high-affinity. Also mediates the uptake of silver(1+). May function in the influx of the platinum-containing chemotherapeutic agents. The platinum-containing chemotherapeutic agents uptake is saturable. In vitro, mediates the transport of cadmium(2+) into cells. Also participates in the first step of copper(2+) acquisition by cells through a direct transfer of copper(2+) from copper(2+) carriers in blood, such as ALB to the N-terminal domain of SLC31A1, leading to copper(2+) reduction and probably followed by copper(1+) stabilization. In addition, functions as a redox sensor to promote angiogenesis in endothelial cells, in a copper(1+) transport independent manner, by transmitting the VEGF-induced ROS signal through a sulfenylation at Cys-189 leadin g to a subsequent disulfide bond formation between SLC31A1 and KDR. The SLC31A1-KDR complex is then co-internalized to early endosomes, driving a sustained VEGFR2 signaling. Mobilizes copper(1+) out of the endosomal compartment, making copper(1+) available for export out of the cells. The chain is High affinity copper uptake protein 1 from Homo sapiens (Human).